A 1040-amino-acid chain; its full sequence is Desmoglein-4 (1040 aa).

The signal sequence occupies residues 1–23; the sequence is MDWLLFRNICLLILFMVVLGVNS. Residues 24–49 constitute a propeptide that is removed on maturation; the sequence is EFIVEVKELDIENGTTTWQTVRRQKR. Cadherin domains lie at 50–157, 158–269, 270–385, and 389–497; these read EWIK…PPVF, TQNV…FPIL, EKTS…GPTF, and SMTF…CPVI. The Extracellular segment spans residues 50-633; that stretch reads EWIKFAAACR…RQSNVGLGPA (584 aa). Asn-110 carries an N-linked (GlcNAc...) asparagine glycan. N-linked (GlcNAc...) asparagine glycosylation occurs at Asn-545. A helical membrane pass occupies residues 634-654; that stretch reads GIGMIILGLLLLFLSPLLLLM. The Cytoplasmic segment spans residues 655 to 1040; sequence CCCKRRQPEG…RYSNIHYSRQ (386 aa). Desmoglein repeat repeat units follow at residues 883–909 and 910–940; these read TLSEAEFQAEMAAASEPMIHGDIIVTE and TYTATDPCVQPTTIVFDSQLPPNVVVTETVM. The interval 1015–1040 is disordered; the sequence is QTTRSTSPMTSQHRVTRYSNIHYSRQ.

Interacts with JUP.

Its subcellular location is the cell membrane. The protein resides in the cell junction. It is found in the desmosome. Functionally, a component of desmosome cell-cell junctions which are required for positive regulation of cellular adhesion. Coordinates the transition from proliferation to differentiation in hair follicle keratinocytes. Plays a role in moderating lymphocyte migration to inflamed skin and maintaining homeostasis of the epidermal inflammatory response. The polypeptide is Desmoglein-4 (Dsg4) (Rattus norvegicus (Rat)).